The following is a 570-amino-acid chain: Hydroxylamine reductase (570 aa).

Residues cysteine 5, cysteine 8, cysteine 17, and cysteine 23 each contribute to the [4Fe-4S] cluster site. Histidine 266, glutamate 290, cysteine 334, cysteine 425, cysteine 453, cysteine 478, glutamate 513, and lysine 515 together coordinate hybrid [4Fe-2O-2S] cluster. Cysteine 425 bears the Cysteine persulfide mark.

Belongs to the HCP family. It depends on [4Fe-4S] cluster as a cofactor. Hybrid [4Fe-2O-2S] cluster serves as cofactor.

Its subcellular location is the cytoplasm. The enzyme catalyses A + NH4(+) + H2O = hydroxylamine + AH2 + H(+). Functionally, catalyzes the reduction of hydroxylamine to form NH(3) and H(2)O. The protein is Hydroxylamine reductase of Clostridium botulinum (strain ATCC 19397 / Type A).